A 401-amino-acid polypeptide reads, in one-letter code: NADH-quinone oxidoreductase subunit D 2 (401 aa).

Belongs to the complex I 49 kDa subunit family. In terms of assembly, NDH-1 is composed of 14 different subunits. Subunits NuoB, C, D, E, F, and G constitute the peripheral sector of the complex.

The protein localises to the cell inner membrane. The enzyme catalyses a quinone + NADH + 5 H(+)(in) = a quinol + NAD(+) + 4 H(+)(out). In terms of biological role, NDH-1 shuttles electrons from NADH, via FMN and iron-sulfur (Fe-S) centers, to quinones in the respiratory chain. The immediate electron acceptor for the enzyme in this species is believed to be ubiquinone. Couples the redox reaction to proton translocation (for every two electrons transferred, four hydrogen ions are translocated across the cytoplasmic membrane), and thus conserves the redox energy in a proton gradient. This is NADH-quinone oxidoreductase subunit D 2 from Thermodesulfovibrio yellowstonii (strain ATCC 51303 / DSM 11347 / YP87).